The following is a 336-amino-acid chain: Coproporphyrin III ferrochelatase (336 aa).

Serine 52 and tyrosine 116 together coordinate Fe-coproporphyrin III. Positions 172 and 255 each coordinate Fe(2+).

The protein belongs to the ferrochelatase family.

It is found in the cytoplasm. It carries out the reaction Fe-coproporphyrin III + 2 H(+) = coproporphyrin III + Fe(2+). It functions in the pathway porphyrin-containing compound metabolism; protoheme biosynthesis. In terms of biological role, involved in coproporphyrin-dependent heme b biosynthesis. Catalyzes the insertion of ferrous iron into coproporphyrin III to form Fe-coproporphyrin III. The chain is Coproporphyrin III ferrochelatase from Mycobacterium avium (strain 104).